The chain runs to 323 residues: Mitochondrial glutamate carrier 1 (323 aa).

Solcar repeat units follow at residues 6–93 (ISLP…FRHQ), 101–214 (LTLL…LNQL), and 223–312 (SPFY…GIAE). Helical transmembrane passes span 12 to 32 (LING…IDLA), 62 to 82 (YFGM…EKAI), 107 to 127 (MLAG…MEML), 189 to 209 (GLGA…PLFA), 223 to 243 (SPFY…AVAV), and 292 to 312 (ALVI…GIAE).

The protein belongs to the mitochondrial carrier (TC 2.A.29) family. In terms of tissue distribution, expressed at high levels in brain, liver, and pancreas.

The protein resides in the mitochondrion inner membrane. It carries out the reaction L-glutamate(in) + H(+)(in) = L-glutamate(out) + H(+)(out). Functionally, mitochondrial glutamate/H(+) symporter. Responsible for the transport of glutamate from the cytosol into the mitochondrial matrix with the concomitant import of a proton. Plays a role in the control of glucose-stimulated insulin secretion. This Homo sapiens (Human) protein is Mitochondrial glutamate carrier 1.